The sequence spans 520 residues: Diacylglycerol O-acyltransferase 1 (520 aa).

Disordered regions lie at residues 28–57 (RRKS…GAPA) and 72–116 (QGTA…AHRR). Residues 34 to 54 (DSSNGLLLSGSDNNSPSDDVG) show a composition bias toward low complexity. Over residues 81–98 (NNGGGDNNGGGRGGGEGR) the composition is skewed to gly residues. A run of 7 helical transmembrane segments spans residues 126 to 146 (AIFK…LIAV), 176 to 196 (WPLF…FTVE), 207 to 227 (PVVI…PVYV), 233 to 253 (SAFL…LKLV), 276 to 296 (VSYY…TLCY), 317 to 337 (KLVI…NPIV), and 365 to 385 (VWLC…AELL). Positions 392–398 (FYKDWWN) match the FYXDWWN motif motif. 3 helical membrane-spanning segments follow: residues 434–454 (LAII…IAVP), 457–477 (LFKL…FITN), and 487–507 (VGNM…CVLL). Residue histidine 447 is part of the active site.

It belongs to the membrane-bound acyltransferase family. Sterol o-acyltransferase subfamily. In terms of assembly, interacts with LPCAT2 and LPAT2. Ubiquitous. Highest expression in young developing seeds.

Its subcellular location is the plastid. It is found in the chloroplast membrane. It localises to the endoplasmic reticulum membrane. It carries out the reaction an acyl-CoA + a 1,2-diacyl-sn-glycerol = a triacyl-sn-glycerol + CoA. The catalysed reaction is 1,2-di-(9Z-octadecenoyl)-sn-glycerol + (9Z)-octadecenoyl-CoA = 1,2,3-tri-(9Z-octadecenoyl)-glycerol + CoA. Its pathway is glycerolipid metabolism; triacylglycerol biosynthesis. With respect to regulation, partially inhibited by niacin. Its function is as follows. Major contributor to triacylglycerol (TAG) synthesis and oil accumulation in seeds. Catalyzes the acylation of the sn-3 hydroxy group of sn-1,2-diacylglycerol using acyl-CoA. Can use palmitoyl-CoA and oleoyl-CoA as substrates. Can use oleoyl-CoA and linoleoyl-CoA as substrates. Has substrate preference for oleoyl-CoA compared to linoleoyl-CoA. Has complementary functions with PDAT1 that are essential for triacylglycerol synthesis and normal development of both seeds and pollen. This Arabidopsis thaliana (Mouse-ear cress) protein is Diacylglycerol O-acyltransferase 1.